We begin with the raw amino-acid sequence, 212 residues long: HTH-type transcriptional repressor NicS (212 aa).

Residues 14–74 (DRTRDNILKA…SVLEHIYASF (61 aa)) form the HTH tetR-type domain. A DNA-binding region (H-T-H motif) is located at residues 37-56 (RIEQISTLAKSNDRMIYYYF).

It participates in cofactor degradation; nicotinate degradation [regulation]. Transcriptional repressor for the nicAB operon, encoding the upper aerobic nicotinate degradation pathway. Acts under non-induced conditions: repression of the nicAB operon becomes alleviated in presence of either nicotinate or 6-hydroxynicotinate (6HNA). This Pseudomonas putida (strain ATCC 47054 / DSM 6125 / CFBP 8728 / NCIMB 11950 / KT2440) protein is HTH-type transcriptional repressor NicS (nicS).